The chain runs to 290 residues: Agglutinin-2 (290 aa).

An N-terminal signal peptide occupies residues 1–35; it reads MAISNTNLLQTKKPISLPLLAFITLFLMLLNRVNS. Residue asparagine 155 is glycosylated (N-linked (GlcNAc...) asparagine). Positions 165 and 167 each coordinate Mn(2+). 3 residues coordinate Ca(2+): aspartate 167, asparagine 171, and aspartate 175. Residues aspartate 175 and histidine 180 each coordinate Mn(2+). An N-linked (GlcNAc...) asparagine glycan is attached at asparagine 200.

Belongs to the leguminous lectin family. In terms of assembly, homotetramer.

Its function is as follows. Mannose/glucose binding bark lectin. In terms of biological role, bark lectins are storage proteins that probably maintain stocks of nitrogen during dormant period. Self-aggregatable molecules that can bind their own carbohydrate side chains. They could also play a role in the plant's defense against phytophagous invertebrates or herbivorous higher animals. The sequence is that of Agglutinin-2 from Cladrastis kentukea (Yellow wood).